A 296-amino-acid chain; its full sequence is Aldo-keto reductase MYCFIDRAFT_156381 (296 aa).

Asp14 provides a ligand contact to NADP(+). Tyr19 acts as the Proton donor in catalysis. Position 83 (His83) interacts with substrate. NADP(+) is bound by residues 113–114 (CN), Gln139, 168–178 (SPLAGGMLTDR), and Arg191. A substrate-binding site is contributed by Tyr201. 255-263 (SSAEQLESN) provides a ligand contact to NADP(+).

Belongs to the aldo/keto reductase family. Aldo/keto reductase 2 subfamily.

Its pathway is secondary metabolite biosynthesis. In terms of biological role, aldo-keto reductase; part of the gene cluster that mediates the biosynthesis of an emodin derivative that may be involved in black Sigatoka disease of banana. The pathway begins with the synthesis of atrochrysone thioester by the polyketide synthase PKS8-1. The atrochrysone carboxyl ACP thioesterase MYCFIDRAFT_190111 then breaks the thioester bond and releases the atrochrysone carboxylic acid from PKS8-1. The decarboxylase MYCFIDRAFT_34057 then catalyzes the concerted decarboxylation-elimination required to convert atochrysone carboxylic acid into emodin anthrone, which is further oxidized to emodin by the anthrone oxygenase MYCFIDRAFT_34418. The functions of the other tailoring enzymes as well as the final product of the cluster have still to be identified. In Pseudocercospora fijiensis (strain CIRAD86) (Black leaf streak disease fungus), this protein is Aldo-keto reductase MYCFIDRAFT_156381.